The chain runs to 92 residues: Acylphosphatase (92 aa).

In terms of domain architecture, Acylphosphatase-like spans 5 to 92; it reads QVQLFVRGRV…GDFFDFRITD (88 aa). Active-site residues include R20 and N38.

Belongs to the acylphosphatase family.

The catalysed reaction is an acyl phosphate + H2O = a carboxylate + phosphate + H(+). The protein is Acylphosphatase (acyP) of Sorangium cellulosum (strain So ce56) (Polyangium cellulosum (strain So ce56)).